We begin with the raw amino-acid sequence, 190 residues long: Segregation and condensation protein B (190 aa).

Belongs to the ScpB family. As to quaternary structure, homodimer. Homodimerization may be required to stabilize the binding of ScpA to the Smc head domains. Component of a cohesin-like complex composed of ScpA, ScpB and the Smc homodimer, in which ScpA and ScpB bind to the head domain of Smc. The presence of the three proteins is required for the association of the complex with DNA.

It is found in the cytoplasm. In terms of biological role, participates in chromosomal partition during cell division. May act via the formation of a condensin-like complex containing Smc and ScpA that pull DNA away from mid-cell into both cell halves. In Ruminiclostridium cellulolyticum (strain ATCC 35319 / DSM 5812 / JCM 6584 / H10) (Clostridium cellulolyticum), this protein is Segregation and condensation protein B.